Here is a 245-residue protein sequence, read N- to C-terminus: Probable phosphatase YcdX (245 aa).

Zn(2+)-binding residues include His7, His9, His15, His40, Glu73, His101, His131, Asp192, and His194.

It belongs to the PHP family. In terms of assembly, homotrimer. The cofactor is Zn(2+).

The chain is Probable phosphatase YcdX from Escherichia coli O17:K52:H18 (strain UMN026 / ExPEC).